Reading from the N-terminus, the 238-residue chain is tRNA1(Val) (adenine(37)-N6)-methyltransferase (238 aa).

It belongs to the methyltransferase superfamily. tRNA (adenine-N(6)-)-methyltransferase family.

It localises to the cytoplasm. The catalysed reaction is adenosine(37) in tRNA1(Val) + S-adenosyl-L-methionine = N(6)-methyladenosine(37) in tRNA1(Val) + S-adenosyl-L-homocysteine + H(+). Functionally, specifically methylates the adenine in position 37 of tRNA(1)(Val) (anticodon cmo5UAC). This chain is tRNA1(Val) (adenine(37)-N6)-methyltransferase, found in Shewanella putrefaciens (strain CN-32 / ATCC BAA-453).